Reading from the N-terminus, the 350-residue chain is MDANKQKALELAMKQIDKQFGKGSLVKLSDKDIEPIAAIPTGSFGLDLALGIGGIPKGRITEIYGPESSGKTTLALSIIAQAQKDGGVAAFIDAEHALDVIYAKHIGVDVDNLLVSQPDYGEQALEIVETLARSGAVDIIVIDSVAALTPKAEIEGNMGDAQVGVQARLMSQALRKLTAAIHKMNTTVVFINQIRMKIGMMGYGSPETTTGGNALKFYSSVRLDVRRIATLKQADKEVGNRVKVKVVKNKVAPPFRIAEFDIMFGKGISREGELLDYGVKLDIIDKSGAWFSYGATRLGQGKENAKEYLKSHPELAQEIEQKIKDALGVELSHMIEAIEKDEDELNLKGE.

65 to 72 (GPESSGKT) contributes to the ATP binding site.

Belongs to the RecA family.

Its subcellular location is the cytoplasm. In terms of biological role, can catalyze the hydrolysis of ATP in the presence of single-stranded DNA, the ATP-dependent uptake of single-stranded DNA by duplex DNA, and the ATP-dependent hybridization of homologous single-stranded DNAs. It interacts with LexA causing its activation and leading to its autocatalytic cleavage. This is Protein RecA from Nautilia profundicola (strain ATCC BAA-1463 / DSM 18972 / AmH).